A 548-amino-acid polypeptide reads, in one-letter code: MYEDDIRRIALINAYQHEGKADLKSVMGKVMAEIPDLRRDPRSAREMVSRIVDEVNSMSAYEIRETVETRYTSSIRKEKKVEEHRLPDLEGVNGPVVMRMAPSPSGPLHIGHTRMAILNDEYVKRYGGELILRIEDTNPKNIDPDAYHMIPEDLEWLGVNVTKIVIQSDRFDLYYAEAKKLMENGHMYVCTCPREEFKKRKLESIPCKDRDNPPETNLELFDKMIDGTIKEGDAVAVVKTDLKHPNPSVRDWIAFRIIEARHPRVDDKYRVYPMMSFSVAVDDHYLGLTHVLRGKDQLTNTDKQRYIFDYNGWKKPYYYHYGMIKFPGIKLKTSLMKKGILSGQYEGWSDIRLGTVRAFAKRGYRPETFRRYWINSGLREIDAIFSIEIFDSINREIVDPRAYRFSFVKDPVPVRIEGMPNISAKLPLHPTHPEYGFREYEVKGSVYIASRDFAAISEGERIRLKDLCYIRKKGNGIIYDGVEMTEKTKIINWCPEGSRDFSVLKPDGSKDSGLIEPKSSGYRGIAQLERYGYVNFADGDDLAYFTHP.

The 'HIGH' region motif lies at 102–112; sequence PSPSGPLHIGH.

The protein belongs to the class-I aminoacyl-tRNA synthetase family. Glutamate--tRNA ligase type 2 subfamily.

It localises to the cytoplasm. It catalyses the reaction tRNA(Glu) + L-glutamate + ATP = L-glutamyl-tRNA(Glu) + AMP + diphosphate. Catalyzes the attachment of glutamate to tRNA(Glu) in a two-step reaction: glutamate is first activated by ATP to form Glu-AMP and then transferred to the acceptor end of tRNA(Glu). This Thermoplasma acidophilum (strain ATCC 25905 / DSM 1728 / JCM 9062 / NBRC 15155 / AMRC-C165) protein is Glutamate--tRNA ligase.